The chain runs to 70 residues: Large ribosomal subunit protein bL31 (70 aa).

Positions 16, 18, 37, and 40 each coordinate Zn(2+).

It belongs to the bacterial ribosomal protein bL31 family. Type A subfamily. Part of the 50S ribosomal subunit. It depends on Zn(2+) as a cofactor.

In terms of biological role, binds the 23S rRNA. This is Large ribosomal subunit protein bL31 from Ectopseudomonas mendocina (strain ymp) (Pseudomonas mendocina).